The chain runs to 242 residues: Enolase-phosphatase E1 (242 aa).

Belongs to the HAD-like hydrolase superfamily. MasA/MtnC family. As to quaternary structure, monomer. It depends on Mg(2+) as a cofactor.

The catalysed reaction is 5-methylsulfanyl-2,3-dioxopentyl phosphate + H2O = 1,2-dihydroxy-5-(methylsulfanyl)pent-1-en-3-one + phosphate. It functions in the pathway amino-acid biosynthesis; L-methionine biosynthesis via salvage pathway; L-methionine from S-methyl-5-thio-alpha-D-ribose 1-phosphate: step 3/6. Its pathway is amino-acid biosynthesis; L-methionine biosynthesis via salvage pathway; L-methionine from S-methyl-5-thio-alpha-D-ribose 1-phosphate: step 4/6. Bifunctional enzyme that catalyzes the enolization of 2,3-diketo-5-methylthiopentyl-1-phosphate (DK-MTP-1-P) into the intermediate 2-hydroxy-3-keto-5-methylthiopentenyl-1-phosphate (HK-MTPenyl-1-P), which is then dephosphorylated to form the acireductone 1,2-dihydroxy-3-keto-5-methylthiopentene (DHK-MTPene). The polypeptide is Enolase-phosphatase E1 (Synechococcus sp. (strain WH7803)).